The sequence spans 89 residues: UPF0237 protein lin0537 (89 aa).

The ACT domain maps to 4-78 (VLTVIGKDNV…EELQVKIHIQ (75 aa)).

Belongs to the UPF0237 family.

In Listeria innocua serovar 6a (strain ATCC BAA-680 / CLIP 11262), this protein is UPF0237 protein lin0537.